We begin with the raw amino-acid sequence, 203 residues long: CASP-like protein 1B1 (203 aa).

Topologically, residues 1–24 (MALVNAEKPEVGSSPSSLGPRNKS) are cytoplasmic. Residues 25 to 45 (WVLLMLRFVAFLATAAATIVM) traverse the membrane as a helical segment. Topologically, residues 46–76 (AANRETKTFVVATIGSTPIKATVTAKFQHTP) are extracellular. Residues 77–97 (AFVFFVIANGMGSIHNLVMIA) traverse the membrane as a helical segment. The Cytoplasmic portion of the chain corresponds to 98–114 (GDTFVRKFDYKGLRWVT). Residues 115–135 (VAILDMLTAALISGGVNAAVF) traverse the membrane as a helical segment. Topologically, residues 136–165 (MAELGKNGNSHAKWNKICDRFGSFCDHGGA) are extracellular. The chain crosses the membrane as a helical span at residues 166-186 (AIIASFIGLLLMLVISIISII). At 187–203 (KLLKPKSPLVDSHVLAP) the chain is on the cytoplasmic side.

This sequence belongs to the Casparian strip membrane proteins (CASP) family. Homodimer and heterodimers.

It is found in the cell membrane. The protein is CASP-like protein 1B1 of Ricinus communis (Castor bean).